A 140-amino-acid chain; its full sequence is Gonadotropin subunit beta-2 (140 aa).

A signal peptide spans 1–24 (MSVYPECTWLLFVCLCHLLVSAGG). Cystine bridges form between Cys30-Cys78, Cys44-Cys93, Cys47-Cys131, Cys55-Cys109, Cys59-Cys111, and Cys114-Cys121. Asn34 carries N-linked (GlcNAc...) asparagine glycosylation.

It belongs to the glycoprotein hormones subunit beta family. In terms of assembly, heterodimer of an alpha and a beta chain.

Its subcellular location is the secreted. Involved in gametogenesis and steroidogenesis. This is Gonadotropin subunit beta-2 (cgbb) from Anguilla anguilla (European freshwater eel).